The following is a 262-amino-acid chain: Ninja-family protein 3 (262 aa).

A disordered region spans residues 48–69 (RRNSLTCNTSKEAAGQSPEEMN).

It belongs to the Ninja family.

It localises to the nucleus. The chain is Ninja-family protein 3 from Zea mays (Maize).